The primary structure comprises 208 residues: Ribonuclease HII (208 aa).

The 193-residue stretch at 11-203 (GPVAGVDEAG…VAAAHEQWLK (193 aa)) folds into the RNase H type-2 domain. A divalent metal cation contacts are provided by D17, E18, and D112.

It belongs to the RNase HII family. Requires Mn(2+) as cofactor. It depends on Mg(2+) as a cofactor.

It localises to the cytoplasm. It carries out the reaction Endonucleolytic cleavage to 5'-phosphomonoester.. Its function is as follows. Endonuclease that specifically degrades the RNA of RNA-DNA hybrids. This is Ribonuclease HII from Corynebacterium jeikeium (strain K411).